Consider the following 634-residue polypeptide: DNA gyrase subunit B (634 aa).

The Toprim domain occupies Arg-416–Pro-530. Mg(2+) contacts are provided by Glu-422, Asp-495, and Asp-497.

It belongs to the type II topoisomerase GyrB family. Heterotetramer, composed of two GyrA and two GyrB chains. In the heterotetramer, GyrA contains the active site tyrosine that forms a transient covalent intermediate with DNA, while GyrB binds cofactors and catalyzes ATP hydrolysis. Mg(2+) serves as cofactor. The cofactor is Mn(2+). Ca(2+) is required as a cofactor.

It is found in the cytoplasm. It carries out the reaction ATP-dependent breakage, passage and rejoining of double-stranded DNA.. Functionally, a type II topoisomerase that negatively supercoils closed circular double-stranded (ds) DNA in an ATP-dependent manner to modulate DNA topology and maintain chromosomes in an underwound state. Negative supercoiling favors strand separation, and DNA replication, transcription, recombination and repair, all of which involve strand separation. Also able to catalyze the interconversion of other topological isomers of dsDNA rings, including catenanes and knotted rings. Type II topoisomerases break and join 2 DNA strands simultaneously in an ATP-dependent manner. In Borreliella burgdorferi (strain ATCC 35210 / DSM 4680 / CIP 102532 / B31) (Borrelia burgdorferi), this protein is DNA gyrase subunit B.